We begin with the raw amino-acid sequence, 465 residues long: Pancreatic triacylglycerol lipase (465 aa).

The signal sequence occupies residues Met-1–Gly-16. 2 disulfides stabilise this stretch: Cys-20–Cys-26 and Cys-107–Cys-118. Ser-169 (nucleophile) is an active-site residue. Asp-193 acts as the Charge relay system in catalysis. Ca(2+)-binding residues include Glu-204, Arg-207, Asp-209, and Asp-212. Cys-254 and Cys-278 are joined by a disulfide. His-280 acts as the Charge relay system in catalysis. Cystine bridges form between Cys-302–Cys-313, Cys-316–Cys-321, and Cys-449–Cys-465. The 111-residue stretch at Trp-355–Cys-465 folds into the PLAT domain.

This sequence belongs to the AB hydrolase superfamily. Lipase family. In terms of assembly, forms a 1:1 stoichiometric complex with (pro)colipase/CLPS. As to expression, pancreas.

It is found in the secreted. The enzyme catalyses a triacylglycerol + H2O = a diacylglycerol + a fatty acid + H(+). It catalyses the reaction 1,2,3-tri-(9Z-octadecenoyl)-glycerol + H2O = di-(9Z)-octadecenoylglycerol + (9Z)-octadecenoate + H(+). It carries out the reaction 1,2,3-tributanoylglycerol + H2O = dibutanoylglycerol + butanoate + H(+). The catalysed reaction is all-trans-retinyl hexadecanoate + H2O = all-trans-retinol + hexadecanoate + H(+). The enzyme catalyses 1,2-di-(9Z-octadecenoyl)-glycerol + H2O = (9Z-octadecenoyl)-glycerol + (9Z)-octadecenoate + H(+). With respect to regulation, inhibited by bile salts, is reactivated by (pro)colipase/CLPS. Functionally, plays an important role in fat metabolism. It preferentially splits the esters of long-chain fatty acids at positions 1 and 3, producing mainly 2-monoacylglycerol and free fatty acids, and shows considerably higher activity against insoluble emulsified substrates than against soluble ones. The protein is Pancreatic triacylglycerol lipase of Mus musculus (Mouse).